A 365-amino-acid chain; its full sequence is DNA replication and repair protein RecF (365 aa).

30–37 is a binding site for ATP; it reads GDNGEGKT.

Belongs to the RecF family.

Its subcellular location is the cytoplasm. Its function is as follows. The RecF protein is involved in DNA metabolism; it is required for DNA replication and normal SOS inducibility. RecF binds preferentially to single-stranded, linear DNA. It also seems to bind ATP. This is DNA replication and repair protein RecF from Leptospira borgpetersenii serovar Hardjo-bovis (strain JB197).